A 293-amino-acid polypeptide reads, in one-letter code: Ribonuclease HIII (293 aa).

The RNase H type-2 domain maps to 78–293 (LPLIGTDEVG…TEKAKKRLER (216 aa)). A divalent metal cation is bound by residues D84, E85, and D187.

It belongs to the RNase HII family. RnhC subfamily. Mn(2+) is required as a cofactor. Requires Mg(2+) as cofactor.

Its subcellular location is the cytoplasm. The catalysed reaction is Endonucleolytic cleavage to 5'-phosphomonoester.. Endonuclease that specifically degrades the RNA of RNA-DNA hybrids. The protein is Ribonuclease HIII of Streptococcus pneumoniae (strain JJA).